A 1093-amino-acid polypeptide reads, in one-letter code: ATP-dependent helicase/deoxyribonuclease subunit B (1093 aa).

This sequence belongs to the helicase family. AddB/RexB type 2 subfamily. As to quaternary structure, heterodimer of AddA and RexB. The cofactor is Mg(2+).

The heterodimer acts as both an ATP-dependent DNA helicase and an ATP-dependent, dual-direction single-stranded exonuclease. Recognizes the chi site generating a DNA molecule suitable for the initiation of homologous recombination. This subunit has 5' -&gt; 3' nuclease activity but not helicase activity. This chain is ATP-dependent helicase/deoxyribonuclease subunit B, found in Streptococcus sanguinis (strain SK36).